Here is a 63-residue protein sequence, read N- to C-terminus: Large ribosomal subunit protein uL29 (63 aa).

The protein belongs to the universal ribosomal protein uL29 family.

In Christiangramia forsetii (strain DSM 17595 / CGMCC 1.15422 / KT0803) (Gramella forsetii), this protein is Large ribosomal subunit protein uL29.